Reading from the N-terminus, the 237-residue chain is Protein CUSTOS (237 aa).

Disordered regions lie at residues 1-23, 50-69, and 97-237; these read MAAP…LDRF, LRVR…TTPE, and ISKA…LGNE. The segment covering 52-62 has biased composition (basic and acidic residues); that stretch reads VRPDCHEHDGN. Residues 162–177 are compositionally biased toward polar residues; the sequence is STLQQEPQSTPSNVCD. The segment covering 181–190 has biased composition (basic residues); that stretch reads PKKKRKKKKK. The short motif at 182 to 190 is the Nucleolar localization signal (NLS1) element; that stretch reads KKKRKKKKK. Basic and acidic residues-rich tracts occupy residues 203–216 and 225–237; these read ETMH…ELQA and KLEM…LGNE. The short motif at 217 to 225 is the Nucleolar localization signal (NLS2) element; that stretch reads KRKKKKKQK.

This sequence belongs to the CUSTOS family. As to quaternary structure, interacts (via NLS1 and NLS2) with dvl2; the interaction is negatively regulated by Wnt stimulation. Interacts with csnk1a1. Interacts with ctnnb1; the interaction is positively regulated by Wnt stimulation. Phosphorylated by ck1/csnk1a1.

Its subcellular location is the nucleus envelope. Its function is as follows. Essential for Spemann-Mangold organizer formation and subsequent anterior head development in the embryo. Inhibits canonical Wnt signaling pathway by antagonizing nuclear import of beta-catenin (ctnnb1) during embryogenesis. This chain is Protein CUSTOS, found in Xenopus laevis (African clawed frog).